Here is an 86-residue protein sequence, read N- to C-terminus: Large ribosomal subunit protein bL27 (86 aa).

The tract at residues 1–23 is disordered; the sequence is MAHKKAGGSTRNGRDSESKRLGV.

Belongs to the bacterial ribosomal protein bL27 family.

In Alkalilimnicola ehrlichii (strain ATCC BAA-1101 / DSM 17681 / MLHE-1), this protein is Large ribosomal subunit protein bL27.